The chain runs to 361 residues: 5-formaminoimidazole-4-carboxamide-1-(beta)-D-ribofuranosyl 5'-monophosphate synthetase (361 aa).

The 5-amino-1-(5-phospho-beta-D-ribosyl)imidazole-4-carboxamide site is built by His-27 and Ser-94. One can recognise an ATP-grasp domain in the interval 116–348 (RRILRWESER…MGQRIAREIK (233 aa)). ATP contacts are provided by residues 156-166 (KFPGARGGRGY), 199-202 (EEYV), and Glu-230. Asn-258 is a 5-amino-1-(5-phospho-beta-D-ribosyl)imidazole-4-carboxamide binding site. Mg(2+) is bound by residues Gln-297 and Glu-310.

This sequence belongs to the phosphohexose mutase family. As to quaternary structure, homohexamer. Dimer of trimers. Mg(2+) serves as cofactor. It depends on Mn(2+) as a cofactor.

It carries out the reaction 5-amino-1-(5-phospho-beta-D-ribosyl)imidazole-4-carboxamide + formate + ATP = 5-formamido-1-(5-phospho-D-ribosyl)imidazole-4-carboxamide + ADP + phosphate. Its pathway is purine metabolism; IMP biosynthesis via de novo pathway; 5-formamido-1-(5-phospho-D-ribosyl)imidazole-4-carboxamide from 5-amino-1-(5-phospho-D-ribosyl)imidazole-4-carboxamide (formate route): step 1/1. With respect to regulation, inhibited by ADP. In terms of biological role, catalyzes the ATP- and formate-dependent formylation of 5-aminoimidazole-4-carboxamide-1-beta-d-ribofuranosyl 5'-monophosphate (AICAR) to 5-formaminoimidazole-4-carboxamide-1-beta-d-ribofuranosyl 5'-monophosphate (FAICAR) in the absence of folates. The chain is 5-formaminoimidazole-4-carboxamide-1-(beta)-D-ribofuranosyl 5'-monophosphate synthetase from Methanocaldococcus jannaschii (strain ATCC 43067 / DSM 2661 / JAL-1 / JCM 10045 / NBRC 100440) (Methanococcus jannaschii).